The sequence spans 556 residues: Phosphoglucomutase (556 aa).

The alpha-D-glucose 1,6-bisphosphate site is built by Arg22 and Ser114. Ser114 serves as the catalytic Phosphoserine intermediate. Ser114, Asp279, Asp281, and Asp283 together coordinate Mg(2+). Residue Ser114 is modified to Phosphoserine. Alpha-D-glucose 1,6-bisphosphate is bound by residues Asp283, Arg284, Thr347, Glu366, Ser368, and Lys379.

This sequence belongs to the phosphohexose mutase family. Monomer. Mg(2+) is required as a cofactor.

It localises to the cytoplasm. It carries out the reaction alpha-D-glucose 1-phosphate = alpha-D-glucose 6-phosphate. The enzyme catalyses O-phospho-L-seryl-[protein] + alpha-D-glucose 1-phosphate = alpha-D-glucose 1,6-bisphosphate + L-seryl-[protein]. It catalyses the reaction alpha-D-glucose 1,6-bisphosphate + L-seryl-[protein] = O-phospho-L-seryl-[protein] + alpha-D-glucose 6-phosphate. Its function is as follows. Catalyzes the reversible isomerization of alpha-D-glucose 1-phosphate to alpha-D-glucose 6-phosphate. The mechanism proceeds via the intermediate compound alpha-D-glucose 1,6-bisphosphate. Key enzyme in hexose metabolism. The reverse reaction is an essential step for biosynthesis because glucose 1-phosphate is the starting point for the synthesis of UDP-glucose, which acts as a precursor for the synthesis of oligosaccharides and trehalose. The sequence is that of Phosphoglucomutase (pgmB) from Emericella nidulans (strain FGSC A4 / ATCC 38163 / CBS 112.46 / NRRL 194 / M139) (Aspergillus nidulans).